A 164-amino-acid polypeptide reads, in one-letter code: Anterior gradient protein 3 (164 aa).

The first 19 residues, 1–19 (MYFPMIELTLVLLASSNLA), serve as a signal peptide directing secretion. A Prevents secretion from ER motif is present at residues 161–164 (QTEL).

This sequence belongs to the AGR family.

The protein localises to the endoplasmic reticulum. The protein resides in the cytoplasm. Required for calcium-mediated regulation of ciliary beat frequency in the airway. In Xenopus tropicalis (Western clawed frog), this protein is Anterior gradient protein 3.